A 124-amino-acid polypeptide reads, in one-letter code: Seripauperin-15 (124 aa).

The N-terminal stretch at 1-20 (MVKLTSIAAGVAAIAAGVAA) is a signal peptide.

The protein belongs to the SRP1/TIP1 family. Seripauperin subfamily.

The polypeptide is Seripauperin-15 (PAU15) (Saccharomyces cerevisiae (strain ATCC 204508 / S288c) (Baker's yeast)).